We begin with the raw amino-acid sequence, 476 residues long: Angiotensinogen (476 aa).

Residues 1–24 (MAPAGLSLGATILCLLAWAGLAAG) form the signal peptide. Cys-42 and Cys-161 form a disulfide bridge. The interval 45-64 (LEKPSVETPADPTLTPVPIQ) is disordered. Residue Asn-295 is glycosylated (N-linked (GlcNAc...) asparagine).

The protein belongs to the serpin family. In response to low blood pressure, the enzyme renin/REN cleaves angiotensinogen to produce angiotensin-1. Angiotensin-1 is a substrate of ACE (angiotensin converting enzyme) that removes a dipeptide to yield the physiologically active peptide angiotensin-2. Angiotensin-1 and angiotensin-2 can be further processed to generate angiotensin-3, angiotensin-4. Angiotensin 1-9 is cleaved from angiotensin-1 by ACE2 and can be further processed by ACE to produce angiotensin 1-7, angiotensin 1-5 and angiotensin 1-4. Angiotensin 1-7 has also been proposed to be cleaved from angiotensin-2 by ACE2 or from angiotensin-1 by MME (neprilysin). Post-translationally, the disulfide bond is labile. Angiotensinogen is present in the circulation in a near 40:60 ratio with the oxidized disulfide-bonded form, which preferentially interacts with receptor-bound renin.

The protein resides in the secreted. Functionally, essential component of the renin-angiotensin system (RAS), a potent regulator of blood pressure, body fluid and electrolyte homeostasis. Its function is as follows. Acts directly on vascular smooth muscle as a potent vasoconstrictor, affects cardiac contractility and heart rate through its action on the sympathetic nervous system, and alters renal sodium and water absorption through its ability to stimulate the zona glomerulosa cells of the adrenal cortex to synthesize and secrete aldosterone. Acts by binding to angiotensin receptors AGTR1 and AGTR2. Also binds the DEAR/FBXW7-AS1 receptor. Stimulates aldosterone release. In terms of biological role, is a ligand for the G-protein coupled receptor MAS1. Has vasodilator and antidiuretic effects. Has an antithrombotic effect that involves MAS1-mediated release of nitric oxide from platelets. This chain is Angiotensinogen (AGT), found in Ovis aries (Sheep).